A 464-amino-acid polypeptide reads, in one-letter code: ATP synthase subunit beta (464 aa).

ATP is bound at residue 153–160 (GGAGVGKT).

It belongs to the ATPase alpha/beta chains family. In terms of assembly, F-type ATPases have 2 components, CF(1) - the catalytic core - and CF(0) - the membrane proton channel. CF(1) has five subunits: alpha(3), beta(3), gamma(1), delta(1), epsilon(1). CF(0) has three main subunits: a(1), b(2) and c(9-12). The alpha and beta chains form an alternating ring which encloses part of the gamma chain. CF(1) is attached to CF(0) by a central stalk formed by the gamma and epsilon chains, while a peripheral stalk is formed by the delta and b chains.

The protein localises to the cell membrane. It catalyses the reaction ATP + H2O + 4 H(+)(in) = ADP + phosphate + 5 H(+)(out). Produces ATP from ADP in the presence of a proton gradient across the membrane. The catalytic sites are hosted primarily by the beta subunits. The chain is ATP synthase subunit beta from Acetivibrio thermocellus (strain ATCC 27405 / DSM 1237 / JCM 9322 / NBRC 103400 / NCIMB 10682 / NRRL B-4536 / VPI 7372) (Clostridium thermocellum).